A 96-amino-acid chain; its full sequence is UPF0235 protein Acid345_4205 (96 aa).

The protein belongs to the UPF0235 family.

The chain is UPF0235 protein Acid345_4205 from Koribacter versatilis (strain Ellin345).